The sequence spans 209 residues: MNLFQNAKFFTTVNHLKDLPDTPLEIAFVGRSNAGKSSAINTLTNHVRLAYVSKTPGRTQHINFFELQNGNFMVDLPGYGYAQVPEAVRAHWVNLLGDYLRHRKELIGLVLIMDARHPLKELDIRMLDFFHTTGRPVHILLSKADKLSKNEQIKTLSQVKKLLKPYSDRQNISVQLFSSLKKQGIDEANRTVGSWFDAADAAASSPEEN.

An EngB-type G domain is found at 22 to 198; sequence TPLEIAFVGR…NRTVGSWFDA (177 aa). S37 and T59 together coordinate Mg(2+).

It belongs to the TRAFAC class TrmE-Era-EngA-EngB-Septin-like GTPase superfamily. EngB GTPase family. Mg(2+) is required as a cofactor.

Necessary for normal cell division and for the maintenance of normal septation. This chain is Probable GTP-binding protein EngB, found in Neisseria gonorrhoeae.